Reading from the N-terminus, the 158-residue chain is Probable deoxyuridine 5'-triphosphate nucleotidohydrolase (158 aa).

Belongs to the dUTPase family. Mg(2+) serves as cofactor.

It carries out the reaction dUTP + H2O = dUMP + diphosphate + H(+). It participates in pyrimidine metabolism; dUMP biosynthesis; dUMP from dCTP (dUTP route): step 1/2. In terms of biological role, this enzyme is involved in nucleotide metabolism: it produces dUMP, the immediate precursor of thymidine nucleotides and it decreases the intracellular concentration of dUTP so that uracil cannot be incorporated into DNA. It does probably not deaminate dCTP. In Sulfolobus islandicus rod-shaped virus 1 (SIRV-1), this protein is Probable deoxyuridine 5'-triphosphate nucleotidohydrolase.